Consider the following 464-residue polypeptide: GPI mannosyltransferase 2 (464 aa).

The Cytoplasmic portion of the chain corresponds to Met1 to Lys70. Residues Gly71 to Met91 traverse the membrane as a helical segment. The Lumenal segment spans residues Ser92–Asp166. Asn108 and Asn139 each carry an N-linked (GlcNAc...) asparagine glycan. A helical membrane pass occupies residues Val167–Tyr187. The Cytoplasmic portion of the chain corresponds to Ala188–Met219. The helical transmembrane segment at Ser220 to Ile240 threads the bilayer. Topologically, residues Lys241–Asn260 are lumenal. Residues Gly261–Glu281 traverse the membrane as a helical segment. Topologically, residues Arg282–Gln289 are cytoplasmic. A helical transmembrane segment spans residues Val290–Tyr309. Over Asn310–Asn356 the chain is Lumenal. N-linked (GlcNAc...) asparagine glycosylation occurs at Asn326. Residues Phe357–Gly377 traverse the membrane as a helical segment. Residues Ser378 to Ser388 are Cytoplasmic-facing. Residues His389–Leu409 form a helical membrane-spanning segment. The Lumenal segment spans residues Asn410–His440. A helical membrane pass occupies residues Cys441 to Leu461. Residues Pro462–Ala464 are Cytoplasmic-facing.

Belongs to the PIGV family. Part of the GPI mannosyltransferase 2 complex composed of gpi18 and C167.09.

Its subcellular location is the endoplasmic reticulum membrane. Its pathway is glycolipid biosynthesis; glycosylphosphatidylinositol-anchor biosynthesis. Mannosyltransferase involved in glycosylphosphatidylinositol-anchor biosynthesis. Responsible for the transfer of the second mannose to the glycosylphosphatidylinositol during GPI precursor assembly. The sequence is that of GPI mannosyltransferase 2 (gpi18) from Schizosaccharomyces pombe (strain 972 / ATCC 24843) (Fission yeast).